The chain runs to 435 residues: Serine--tRNA ligase (435 aa).

242 to 244 provides a ligand contact to L-serine; it reads TAE. Residue 273–275 participates in ATP binding; sequence RSE. E296 contributes to the L-serine binding site. Residue 360-363 coordinates ATP; it reads EISS. S396 serves as a coordination point for L-serine.

This sequence belongs to the class-II aminoacyl-tRNA synthetase family. Type-1 seryl-tRNA synthetase subfamily. Homodimer. The tRNA molecule binds across the dimer.

Its subcellular location is the cytoplasm. It catalyses the reaction tRNA(Ser) + L-serine + ATP = L-seryl-tRNA(Ser) + AMP + diphosphate + H(+). It carries out the reaction tRNA(Sec) + L-serine + ATP = L-seryl-tRNA(Sec) + AMP + diphosphate + H(+). It participates in aminoacyl-tRNA biosynthesis; selenocysteinyl-tRNA(Sec) biosynthesis; L-seryl-tRNA(Sec) from L-serine and tRNA(Sec): step 1/1. Its function is as follows. Catalyzes the attachment of serine to tRNA(Ser). Is also able to aminoacylate tRNA(Sec) with serine, to form the misacylated tRNA L-seryl-tRNA(Sec), which will be further converted into selenocysteinyl-tRNA(Sec). In Vibrio campbellii (strain ATCC BAA-1116), this protein is Serine--tRNA ligase.